Here is a 96-residue protein sequence, read N- to C-terminus: MSRRCELTGKAVLTGHLVSHSNRKTKRRFLPNLCKVTLLSDTLGRSVRLRISANALRSVEHRGGLDAFLVKAGEQELSQNARLLKREIEKKLAEAA.

The protein belongs to the bacterial ribosomal protein bL28 family.

This is Large ribosomal subunit protein bL28 from Methylobacterium nodulans (strain LMG 21967 / CNCM I-2342 / ORS 2060).